Consider the following 384-residue polypeptide: Cytochrome b (384 aa).

4 helical membrane passes run 32–52 (LGSLLGLCLVIQITTGIFLAM), 76–98 (WLIRYMHTNGASFFFICMYIHIG), 113–133 (VWTVGVIIFILTMAAAFLGYC), and 179–199 (FFTFHYLVPFIIAAMVIMHLM). Residues histidine 82 and histidine 96 each contribute to the heme b site. Heme b is bound by residues histidine 183 and histidine 197. Histidine 202 is an a ubiquinone binding site. 4 consecutive transmembrane segments (helical) span residues 225 to 245 (FIFKDLVTVFVFMIFFSLFVF), 289 to 309 (LGGVITMFGTILVLLMLPITD), 321 to 341 (LSKFFFFLFITNFILLGKLGE), and 348 to 368 (FILMGQICTFIYFAYFLILVP).

This sequence belongs to the cytochrome b family. As to quaternary structure, fungal cytochrome b-c1 complex contains 10 subunits; 3 respiratory subunits, 2 core proteins and 5 low-molecular weight proteins. Cytochrome b-c1 complex is a homodimer. The cofactor is heme b.

It localises to the mitochondrion inner membrane. Its function is as follows. Component of the ubiquinol-cytochrome c reductase complex (complex III or cytochrome b-c1 complex) that is part of the mitochondrial respiratory chain. The b-c1 complex mediates electron transfer from ubiquinol to cytochrome c. Contributes to the generation of a proton gradient across the mitochondrial membrane that is then used for ATP synthesis. The protein is Cytochrome b (COB) of Eremothecium gossypii (strain ATCC 10895 / CBS 109.51 / FGSC 9923 / NRRL Y-1056) (Yeast).